We begin with the raw amino-acid sequence, 724 residues long: MTQSFPNETTLNDGAKRLENEGSGNFEESPAKRIKLDKPENPIHAQPENNGAQRKKGTAPIREEYLVRSGQEPSVKQTSDVRDDDEAEAARHQERAGEKGGKQRKKQKGQNTARKFGKSQDEKGLCQSVSHSPELSPRTCQFGDNCRFEHNLRKYLKEYKREDLKTFNGMCPVWDAYGLCFSGWKCRFVGSHMTERELEDGRKELVLVEDEERKNAAMPLVEGGAEGGVFNSISTEQKVDLMKKRRKTPKSDAYTTWLDETSKQLEIHNHGRRFADENNVEANGEARDEVEDRRAQFKEPPFLPSEKRRLYFGSETPVLAPLTTQGNLPFRRLCVELGAQFTYSEMAMSLPIVQGHKGEWALMKAHQSEVLPPTIKPNQGVVKDYDHSRDLKFGVQISANKPWQALKATEVMTALCPHLRVVDLNCGCPIDLVYRDGAGSALLEHPSKLEKILRGMNAVSNEVPVSAKIRMGTKDNSPTALKLIERLVLGGPEFTEIGQGPAGVAAITLHGRSRQQRYTREADWSYISECAALIRRLNERSDDLTDTIREADDRLQAPGRRVYFLGNGDCYSHEDYYRAIGESGVDTVMIARGALMKPWIFEEIQAGQYLDKSASERLSIVEKFAKYGLNAWGSDEHGVGTTRRFLLELLSFTHRYIPIGLLEHLPPRIQDRPPAYKGRNELETLLASDNYKDWIKISEMFLGPAHKDFKFEPKHKSNSYEIEG.

The segment covering 1-12 (MTQSFPNETTLN) has biased composition (polar residues). A disordered region spans residues 1-135 (MTQSFPNETT…CQSVSHSPEL (135 aa)). Basic and acidic residues-rich tracts occupy residues 29 to 41 (SPAKRIKLDKPEN) and 88 to 101 (EAARHQERAGEKGG). C3H1-type zinc fingers lie at residues 120–153 (QDEKGLCQSVSHSPELSPRTCQFGDNCRFEHNLR) and 171–192 (CPVWDAYGLCFSGWKCRFVGSH). Residues 321–323 (PLT) and Gln396 each bind FMN. The active-site Proton donor is Cys428. FMN is bound by residues Lys468, His510, 567–569 (NGD), and 591–592 (AR).

Belongs to the Dus family. Dus3 subfamily. The cofactor is FMN.

The protein localises to the cytoplasm. It localises to the nucleus. It catalyses the reaction 5,6-dihydrouridine(47) in tRNA + NAD(+) = uridine(47) in tRNA + NADH + H(+). The enzyme catalyses 5,6-dihydrouridine(47) in tRNA + NADP(+) = uridine(47) in tRNA + NADPH + H(+). The catalysed reaction is a 5,6-dihydrouridine in mRNA + NAD(+) = a uridine in mRNA + NADH + H(+). It carries out the reaction a 5,6-dihydrouridine in mRNA + NADP(+) = a uridine in mRNA + NADPH + H(+). Its function is as follows. Catalyzes the synthesis of dihydrouridine, a modified base found in the D-loop of most tRNAs. Specifically modifies U47 in cytoplasmic tRNAs. Catalyzes the synthesis of dihydrouridine in some mRNAs, thereby affecting their translation. The sequence is that of tRNA-dihydrouridine(47) synthase [NAD(P)(+)] (DUS3) from Coccidioides immitis (strain RS) (Valley fever fungus).